Here is a 49-residue protein sequence, read N- to C-terminus: Large ribosomal subunit protein bL33B (49 aa).

It belongs to the bacterial ribosomal protein bL33 family.

The polypeptide is Large ribosomal subunit protein bL33B (Exiguobacterium sibiricum (strain DSM 17290 / CCUG 55495 / CIP 109462 / JCM 13490 / 255-15)).